We begin with the raw amino-acid sequence, 387 residues long: Na(+)/H(+)-K(+) antiporter GerN (387 aa).

11 helical membrane-spanning segments follow: residues 29–49 (PSVL…LGWI), 54–74 (LLTQ…GLET), 87–107 (LAVA…SGLV), 114–134 (NAVF…VQTL), 149–169 (LGAA…AMSF), 175–195 (VNLT…ILIG), 219–239 (ALII…AGII), 263–283 (PIAY…NITF), 290–310 (IWFI…GCGF), 324–344 (IIGA…GTGL), and 347–367 (GLLA…TTMI).

It belongs to the monovalent cation:proton antiporter 2 (CPA2) transporter (TC 2.A.37) family.

The protein resides in the membrane. In terms of biological role, na(+)/H(+) antiporter that extrudes sodium in exchange for external protons. Can also use potassium as a coupling ion, without completely replacing H(+). This Na(+)/H(+)-K(+) antiport is much more rapid than Na(+)/H(+) antiport. Can also extrude lithium. Important for the inosine-dependent germination of spores. This chain is Na(+)/H(+)-K(+) antiporter GerN (gerN), found in Bacillus cereus.